Consider the following 270-residue polypeptide: Putative pyruvate, phosphate dikinase regulatory protein (270 aa).

Gly149 to Thr156 contributes to the ADP binding site.

Belongs to the pyruvate, phosphate/water dikinase regulatory protein family. PDRP subfamily.

It catalyses the reaction N(tele)-phospho-L-histidyl/L-threonyl-[pyruvate, phosphate dikinase] + ADP = N(tele)-phospho-L-histidyl/O-phospho-L-threonyl-[pyruvate, phosphate dikinase] + AMP + H(+). The catalysed reaction is N(tele)-phospho-L-histidyl/O-phospho-L-threonyl-[pyruvate, phosphate dikinase] + phosphate + H(+) = N(tele)-phospho-L-histidyl/L-threonyl-[pyruvate, phosphate dikinase] + diphosphate. Functionally, bifunctional serine/threonine kinase and phosphorylase involved in the regulation of the pyruvate, phosphate dikinase (PPDK) by catalyzing its phosphorylation/dephosphorylation. This Thermoanaerobacter pseudethanolicus (strain ATCC 33223 / 39E) (Clostridium thermohydrosulfuricum) protein is Putative pyruvate, phosphate dikinase regulatory protein.